Reading from the N-terminus, the 379-residue chain is MESEFQQHHFLLHDHQHQRPRNSGLIRYQSAPSSYFSSFGESIEEFLDRPTSPETERILSGFLQTTDTSDNVDSFLHHTFNSDGTEKKPPEVKTEDEDAEIPVTATATAMEVVVSGDGEISVNPEVSIGYVASVSRNKRPREKDDRTPVNNLARHNSSPAGLFSSIDVETAYAAVMKSMGGFGGSNVMSTSNTEASSLTPRSKLLPPTSRAMSPISEVDVKPGFSSRLPPRTLSGGFNRSFGNEGSASSKLTALARTQSGGLDQYKTKDEDSASRRPPLAHHMSLPKSLSDIEQLLSDSIPCKIRAKRGCATHPRSIAERVRRTKISERMRKLQDLVPNMDTQTNTADMLDLAVQYIKDLQEQVKALEESRARCRCSSA.

Over residues 1-17 (MESEFQQHHFLLHDHQH) the composition is skewed to basic and acidic residues. The segment at 1 to 21 (MESEFQQHHFLLHDHQHQRPR) is disordered. Phosphoserine is present on S74. Disordered stretches follow at residues 79 to 98 (TFNS…EDED), 133 to 156 (SVSR…ARHN), and 190 to 286 (TSNT…MSLP). Basic and acidic residues predominate over residues 84–93 (GTEKKPPEVK). Polar residues predominate over residues 190 to 200 (TSNTEASSLTP). A phosphoserine mark is found at S213 and S234. Residues 235–261 (GGFNRSFGNEGSASSKLTALARTQSGG) are compositionally biased toward polar residues. Positions 265–274 (YKTKDEDSAS) are enriched in basic and acidic residues. The region spanning 310-360 (CATHPRSIAERVRRTKISERMRKLQDLVPNMDTQTNTADMLDLAVQYIKDL) is the bHLH domain.

In terms of assembly, homodimer.

Its subcellular location is the nucleus. The protein is Transcription factor bHLH122 (BHLH122) of Arabidopsis thaliana (Mouse-ear cress).